We begin with the raw amino-acid sequence, 522 residues long: Glucans biosynthesis protein G (522 aa).

Positions 1–33 (MLDNKFGFKQRVASLRWLSAAIMLSVSAVPAWA) are cleaved as a signal peptide.

The protein belongs to the OpgD/OpgG family.

Its subcellular location is the periplasm. Its pathway is glycan metabolism; osmoregulated periplasmic glucan (OPG) biosynthesis. In terms of biological role, involved in the biosynthesis of osmoregulated periplasmic glucans (OPGs). The chain is Glucans biosynthesis protein G from Pectobacterium atrosepticum (strain SCRI 1043 / ATCC BAA-672) (Erwinia carotovora subsp. atroseptica).